Reading from the N-terminus, the 395-residue chain is Vibriobactin-specific isochorismate synthase (395 aa).

The protein belongs to the isochorismate synthase family.

It catalyses the reaction chorismate = isochorismate. The protein operates within siderophore biosynthesis; vibriobactin biosynthesis. This chain is Vibriobactin-specific isochorismate synthase (vibC), found in Vibrio cholerae serotype O1 (strain ATCC 39315 / El Tor Inaba N16961).